The sequence spans 181 residues: Large ribosomal subunit protein uL10 (181 aa).

The protein belongs to the universal ribosomal protein uL10 family. Part of the ribosomal stalk of the 50S ribosomal subunit. The N-terminus interacts with L11 and the large rRNA to form the base of the stalk. The C-terminus forms an elongated spine to which L12 dimers bind in a sequential fashion forming a multimeric L10(L12)X complex.

In terms of biological role, forms part of the ribosomal stalk, playing a central role in the interaction of the ribosome with GTP-bound translation factors. The sequence is that of Large ribosomal subunit protein uL10 from Chloroflexus aggregans (strain MD-66 / DSM 9485).